Here is a 397-residue protein sequence, read N- to C-terminus: Xyloglucan O-acetyltransferase 3 (397 aa).

The Cytoplasmic segment spans residues 1–3; sequence MNR. The helical; Signal-anchor for type II membrane protein transmembrane segment at 4–24 threads the bilayer; that stretch reads FFYTVGLIFLFSFFILYSPKT. Over 25 to 397 the chain is Lumenal; that stretch reads SDLSNNVDLH…RHAFTDFTWS (373 aa). Cystine bridges form between C48–C98, C69–C134, C78–C370, and C293–C366. N66 is a glycosylation site (N-linked (GlcNAc...) asparagine). The GDS motif motif lies at 121-123; that stretch reads GDS. S123 serves as the catalytic Nucleophile. N-linked (GlcNAc...) asparagine glycosylation is found at N162, N182, and N294. D365 functions as the Proton donor in the catalytic mechanism. The DXXH motif signature appears at 365-368; that stretch reads DCVH. Catalysis depends on H368, which acts as the Proton acceptor.

Belongs to the PC-esterase family. TBL subfamily.

The protein localises to the golgi apparatus membrane. Its function is as follows. Xyloglucan acetyltransferase that catalyzes the acetylation of fucosylated Gal residues on xyloglucan side chains. Predominantly catalyze 6-O-monoacetylation of Gal residues in the Fuc-Gal-Xyl trisaccharide side chains of xyloglucan oligomers. The protein is Xyloglucan O-acetyltransferase 3 of Populus trichocarpa (Western balsam poplar).